Here is a 234-residue protein sequence, read N- to C-terminus: MFDTKALQAEQRQRASEISLHDGIDNQFVRFIAGADVGFEQHGEITRAAIAILRYPSLALVEYQVARVATSLPYIPGLLSFREYPALLAAWAQLQQRPDLILVDGQGIAHPRRLGVASHFGLLVDVPTIGVAKSRLCGDFLPLHQDVGAVQPLFDNDEQLGWVWRSKIRCNPLFISPGHRVSVGSALAWVQRCMAGYRLPEPTRWADAIASNRPQFQRWLRKNPDFLGKRRDMI.

The Mg(2+) site is built by Asp36 and Asp104.

This sequence belongs to the endonuclease V family. Requires Mg(2+) as cofactor.

It localises to the cytoplasm. It catalyses the reaction Endonucleolytic cleavage at apurinic or apyrimidinic sites to products with a 5'-phosphate.. Its function is as follows. DNA repair enzyme involved in the repair of deaminated bases. Selectively cleaves double-stranded DNA at the second phosphodiester bond 3' to a deoxyinosine leaving behind the intact lesion on the nicked DNA. In Yersinia pseudotuberculosis serotype O:1b (strain IP 31758), this protein is Endonuclease V.